The following is a 529-amino-acid chain: Na(+)/H(+) antiporter NhaB (529 aa).

A run of 12 helical transmembrane segments spans residues 13 to 33, 34 to 54, 90 to 110, 113 to 133, 136 to 156, 205 to 225, 241 to 261, 306 to 326, 327 to 347, 351 to 371, 451 to 471, and 479 to 499; these read FLGKAPDWYKVAIISFLIINP, IVFFFVDPFVAGWLLVVEFIF, LVANIEVLLLLVFMVAGIYFM, LLLFIFTKILLGIRSKAILSL, CFAAAFLSAFLDALTVIAVVI, LLMHAGVGTALGGVTTMVGEP, FLIRMAPVTLPVFVCGLLTCF, GLIAVWLIVGLALHLAAVGLI, GLSVIILATAFTGVIEEHSLG, EEALPFTALLAVFFSIVAVII, ATPNGQAAFLFLLTSALAPLI, and VIMALPYTIVLALVGLFGIVF.

It belongs to the NhaB Na(+)/H(+) (TC 2.A.34) antiporter family.

It localises to the cell inner membrane. It carries out the reaction 2 Na(+)(in) + 3 H(+)(out) = 2 Na(+)(out) + 3 H(+)(in). Functionally, na(+)/H(+) antiporter that extrudes sodium in exchange for external protons. In Vibrio vulnificus (strain CMCP6), this protein is Na(+)/H(+) antiporter NhaB.